The following is a 60-amino-acid chain: Short neurotoxin C (60 aa).

Disulfide bonds link Cys-3-Cys-22, Cys-17-Cys-39, Cys-41-Cys-52, and Cys-53-Cys-58.

This sequence belongs to the three-finger toxin family. Short-chain subfamily. Type I alpha-neurotoxin sub-subfamily. In terms of tissue distribution, expressed by the venom gland.

It is found in the secreted. Functionally, binds to muscle nicotinic acetylcholine receptor (nAChR) and inhibit acetylcholine from binding to the receptor, thereby impairing neuromuscular transmission. This Aipysurus laevis (Olive sea snake) protein is Short neurotoxin C.